The chain runs to 89 residues: Large ribosomal subunit protein eL34 (89 aa).

This sequence belongs to the eukaryotic ribosomal protein eL34 family.

This is Large ribosomal subunit protein eL34 from Methanococcus maripaludis (strain C6 / ATCC BAA-1332).